We begin with the raw amino-acid sequence, 486 residues long: Protein nucleotidyltransferase YdiU (486 aa).

The ATP site is built by G90, G92, R93, K113, D125, G126, R176, and R183. D252 acts as the Proton acceptor in catalysis. Mg(2+)-binding residues include N253 and D262. D262 serves as a coordination point for ATP.

Belongs to the SELO family. Mg(2+) serves as cofactor. Mn(2+) is required as a cofactor.

The catalysed reaction is L-seryl-[protein] + ATP = 3-O-(5'-adenylyl)-L-seryl-[protein] + diphosphate. The enzyme catalyses L-threonyl-[protein] + ATP = 3-O-(5'-adenylyl)-L-threonyl-[protein] + diphosphate. It catalyses the reaction L-tyrosyl-[protein] + ATP = O-(5'-adenylyl)-L-tyrosyl-[protein] + diphosphate. It carries out the reaction L-histidyl-[protein] + UTP = N(tele)-(5'-uridylyl)-L-histidyl-[protein] + diphosphate. The catalysed reaction is L-seryl-[protein] + UTP = O-(5'-uridylyl)-L-seryl-[protein] + diphosphate. The enzyme catalyses L-tyrosyl-[protein] + UTP = O-(5'-uridylyl)-L-tyrosyl-[protein] + diphosphate. In terms of biological role, nucleotidyltransferase involved in the post-translational modification of proteins. It can catalyze the addition of adenosine monophosphate (AMP) or uridine monophosphate (UMP) to a protein, resulting in modifications known as AMPylation and UMPylation. This chain is Protein nucleotidyltransferase YdiU, found in Pseudomonas aeruginosa (strain ATCC 15692 / DSM 22644 / CIP 104116 / JCM 14847 / LMG 12228 / 1C / PRS 101 / PAO1).